Reading from the N-terminus, the 267-residue chain is tRNA pseudouridine synthase A (267 aa).

D55 (nucleophile) is an active-site residue. Y111 provides a ligand contact to substrate.

It belongs to the tRNA pseudouridine synthase TruA family.

The catalysed reaction is uridine(38/39/40) in tRNA = pseudouridine(38/39/40) in tRNA. Its function is as follows. Formation of pseudouridine at positions 38, 39 and 40 in the anticodon stem and loop of transfer RNAs. The sequence is that of tRNA pseudouridine synthase A from Thermococcus kodakarensis (strain ATCC BAA-918 / JCM 12380 / KOD1) (Pyrococcus kodakaraensis (strain KOD1)).